The primary structure comprises 593 residues: Tyrosine-protein phosphatase non-receptor type 9 (593 aa).

M1 carries the post-translational modification N-acetylmethionine. The disordered stretch occupies residues 1–21 (MEPATAPRPDMAPELTPEEEQ). One can recognise a CRAL-TRIO domain in the interval 84–243 (EEPLRSEILS…NLGGYIKIDL (160 aa)). The region spanning 303-574 (IYEEYEDIRR…YFCYKAILEF (272 aa)) is the Tyrosine-protein phosphatase domain. Substrate-binding positions include D470, 515–521 (CSAGIGR), and Q559. Residue C515 is the Phosphocysteine intermediate of the active site.

This sequence belongs to the protein-tyrosine phosphatase family. Non-receptor class 3 subfamily.

The protein localises to the cytoplasm. The enzyme catalyses O-phospho-L-tyrosyl-[protein] + H2O = L-tyrosyl-[protein] + phosphate. Protein-tyrosine phosphatase that could participate in the transfer of hydrophobic ligands or in functions of the Golgi apparatus. The sequence is that of Tyrosine-protein phosphatase non-receptor type 9 (Ptpn9) from Rattus norvegicus (Rat).